A 290-amino-acid polypeptide reads, in one-letter code: 1D-myo-inositol 2-acetamido-2-deoxy-alpha-D-glucopyranoside deacetylase (290 aa).

The Zn(2+) site is built by H17, D20, and H150.

It belongs to the MshB deacetylase family. Zn(2+) serves as cofactor.

The enzyme catalyses 1D-myo-inositol 2-acetamido-2-deoxy-alpha-D-glucopyranoside + H2O = 1D-myo-inositol 2-amino-2-deoxy-alpha-D-glucopyranoside + acetate. In terms of biological role, catalyzes the deacetylation of 1D-myo-inositol 2-acetamido-2-deoxy-alpha-D-glucopyranoside (GlcNAc-Ins) in the mycothiol biosynthesis pathway. In Corynebacterium glutamicum (strain R), this protein is 1D-myo-inositol 2-acetamido-2-deoxy-alpha-D-glucopyranoside deacetylase.